A 326-amino-acid polypeptide reads, in one-letter code: DnaJ homolog subfamily B member 6 (326 aa).

Residues 2–69 (VDYYEVLGVQ…KKRDIYDKYG (68 aa)) enclose the J domain. The segment at 2-146 (VDYYEVLGVQ…TGSFFSAFSG (145 aa)) is interaction with HSP70. The interval 119 to 242 (FEDFFGNRRG…ADDDALAEER (124 aa)) is interaction with KRT18. Arg-135 bears the Omega-N-methylarginine mark. Residues 249-326 (ALPAQPAGLR…KKKKSTKGNH (78 aa)) form a disordered region. The residue at position 277 (Ser-277) is a Phosphoserine.

As to quaternary structure, homooligomer. Interacts with BAG3, HSPB8 and STUB1. Interacts with ALKBH1. Interacts with HSP70, KRT18 and PTTG.

It is found in the cytoplasm. The protein localises to the perinuclear region. Its subcellular location is the nucleus. It localises to the myofibril. The protein resides in the sarcomere. It is found in the z line. Its function is as follows. Has a stimulatory effect on the ATPase activity of HSP70 in a dose-dependent and time-dependent manner and hence acts as a co-chaperone of HSP70. Plays an indispensable role in the organization of KRT8/KRT18 filaments. Acts as an endogenous molecular chaperone for neuronal proteins including huntingtin. Suppresses aggregation and toxicity of polyglutamine-containing, aggregation-prone proteins. Also reduces cellular toxicity and caspase-3 activity. This is DnaJ homolog subfamily B member 6 (DNAJB6) from Pongo abelii (Sumatran orangutan).